Reading from the N-terminus, the 319-residue chain is Ribonucleoside-diphosphate reductase small chain (319 aa).

Fe cation-binding residues include aspartate 70, glutamate 101, and histidine 104. Tyrosine 108 is an active-site residue. The Fe cation site is built by glutamate 163, glutamate 197, and histidine 200. The interaction with R1 stretch occupies residues 313–319; the sequence is FSLDVDF.

It belongs to the ribonucleoside diphosphate reductase small chain family. In terms of assembly, interacts with RNR1/OPG080 subunit. Can interact with host RNR1 supunit. Requires Fe cation as cofactor.

The enzyme catalyses a 2'-deoxyribonucleoside 5'-diphosphate + [thioredoxin]-disulfide + H2O = a ribonucleoside 5'-diphosphate + [thioredoxin]-dithiol. Its function is as follows. Ribonucleoside-diphosphate reductase holoenzyme provides the precursors necessary for viral DNA synthesis. Allows virus growth in non-dividing cells. Catalyzes the biosynthesis of deoxyribonucleotides from the corresponding ribonucleotides. This Variola virus protein is Ribonucleoside-diphosphate reductase small chain (OPG048).